The chain runs to 1406 residues: Protein crumbs homolog 1 (1406 aa).

An N-terminal signal peptide occupies residues 1 to 25; sequence MALKNINYLLIFYLSFSLLIYIKNS. Residues 26 to 1347 are Extracellular-facing; the sequence is FCNKNNTRCL…DDLISDIFTT (1322 aa). Asn-30, Asn-41, and Asn-42 each carry an N-linked (GlcNAc...) asparagine glycan. EGF-like domains are found at residues 30–68, 70–108, and 110–146; these read NNTR…KDCD, MKDP…TICE, and TIGS…RFCE. 20 disulfide bridges follow: Cys-34/Cys-45, Cys-39/Cys-54, Cys-56/Cys-67, Cys-74/Cys-85, Cys-79/Cys-96, Cys-98/Cys-107, Cys-114/Cys-125, Cys-119/Cys-134, Cys-136/Cys-145, Cys-152/Cys-163, Cys-157/Cys-172, Cys-174/Cys-183, Cys-190/Cys-201, Cys-195/Cys-210, Cys-212/Cys-221, Cys-228/Cys-239, Cys-233/Cys-248, Cys-250/Cys-259, Cys-266/Cys-277, and Cys-271/Cys-286. One can recognise an EGF-like 4; calcium-binding domain in the interval 148–184; that stretch reads DHDECASSPCQNGAVCQDGIDGYSCFCVPGYQGRHCD. The 37-residue stretch at 186–222 folds into the EGF-like 5; calcium-binding domain; the sequence is EVDECASDPCKNEATCLNEIGRYTCICPHNYSGVNCE. The N-linked (GlcNAc...) asparagine glycan is linked to Asn-215. An EGF-like 6; calcium-binding domain is found at 224-260; that stretch reads EIDECWSQPCLNGATCQDALGAYFCDCAPGFLGDHCE. Positions 262-299 constitute an EGF-like 7; calcium-binding domain; the sequence is NTDECASQPCLHGGLCVDGENRYSCNCTGSGFTGTHCE. Asn-287 is a glycosylation site (N-linked (GlcNAc...) asparagine). Cystine bridges form between Cys-288–Cys-298, Cys-305–Cys-316, Cys-310–Cys-325, Cys-327–Cys-336, Cys-343–Cys-354, Cys-348–Cys-383, Cys-385–Cys-394, Cys-401–Cys-412, Cys-406–Cys-421, Cys-423–Cys-438, Cys-445–Cys-456, Cys-450–Cys-469, and Cys-471–Cys-480. EGF-like domains are found at residues 301–337 and 339–395; these read LMPL…AQCE and DLNE…IHCE. N-linked (GlcNAc...) asparagine glycosylation is found at Asn-313 and Asn-322. Residues 397-439 enclose the EGF-like 10; calcium-binding domain; the sequence is DVNECSSNPCQNGGTCENLPGNYTCHCPFDNLSRTFYGGRDCS. Residues Asn-418, Asn-427, and Asn-453 are each glycosylated (N-linked (GlcNAc...) asparagine). The region spanning 441 to 481 is the EGF-like 11 domain; that stretch reads ILLGCTHQQCLNNGTCIPHFQDGQHGFSCLCPSGYTGSLCE. Residues 485 to 670 form the Laminin G-like 1 domain; sequence TLSFEGDGFL…GSSLNVKAGC (186 aa). N-linked (GlcNAc...) asparagine glycans are attached at residues Asn-550, Asn-561, and Asn-657. Cystine bridges form between Cys-642–Cys-670, Cys-676–Cys-687, Cys-681–Cys-696, and Cys-698–Cys-707. One can recognise an EGF-like 12 domain in the interval 672-708; sequence RKDWCESQPCQSRGRCINLWLSYQCDCHRPYEGPNCL. The 172-residue stretch at 714–885 folds into the Laminin G-like 2 domain; the sequence is GRFGQDDSTG…PVLVNVTQGC (172 aa). N-linked (GlcNAc...) asparagine glycans are attached at residues Asn-757, Asn-871, and Asn-880. Disulfide bonds link Cys-851/Cys-885, Cys-891/Cys-902, Cys-896/Cys-911, Cys-913/Cys-922, Cys-928/Cys-939, and Cys-933/Cys-948. EGF-like domains are found at residues 887-923 and 924-960; these read GDNS…KACE and EVQW…QSGQ. The Laminin G-like 3 domain maps to 950 to 1137; the sequence is ANAVFNGQSG…ISTNSVVTGC (188 aa). Residues Asn-968, Asn-975, and Asn-1000 are each glycosylated (N-linked (GlcNAc...) asparagine). Disulfide bonds link Cys-1096/Cys-1137, Cys-1143/Cys-1154, Cys-1148/Cys-1163, Cys-1165/Cys-1174, Cys-1181/Cys-1191, Cys-1186/Cys-1200, Cys-1202/Cys-1211, Cys-1218/Cys-1229, Cys-1223/Cys-1238, Cys-1240/Cys-1249, Cys-1259/Cys-1274, Cys-1268/Cys-1283, Cys-1285/Cys-1294, Cys-1301/Cys-1312, Cys-1306/Cys-1321, and Cys-1323/Cys-1332. In terms of domain architecture, EGF-like 15 spans 1139–1175; sequence QLNVCNSNPCLHGGNCEDIYSSYHCSCPLGWSGKHCE. The EGF-like 16; calcium-binding domain maps to 1177–1212; sequence NIDECFSNPCIHGNCSDRVAAYHCTCEPGYTGVNCE. The N-linked (GlcNAc...) asparagine glycan is linked to Asn-1190. EGF-like domains lie at 1214-1250 and 1255-1295; these read DIDN…KFCR and PSTV…EWCE. N-linked (GlcNAc...) asparagine glycans are attached at residues Asn-1243, Asn-1265, and Asn-1273. The EGF-like 19; calcium-binding domain occupies 1297–1333; the sequence is DIDECASDPCVNGGLCQDLLNKFQCLCDVAFAGERCE. The helical transmembrane segment at 1348–1368 threads the bilayer; sequence IGSVTVALLLILLLAIVASVV. The Cytoplasmic segment spans residues 1369-1406; that stretch reads TSNKRATQGTYSPSRQEKEGSRVEMWNLMPPPAMERLI. The interaction with EPB41L5 stretch occupies residues 1370–1406; that stretch reads SNKRATQGTYSPSRQEKEGSRVEMWNLMPPPAMERLI.

The protein belongs to the Crumbs protein family. As to quaternary structure, component of a complex composed of PALS1, CRB1 and EPB41L5. Within the complex, interacts (via intracellular domain) with PALS1 and EPB41L5 (via FERM domain). Forms a complex with MPP4 and PALS1. Interacts with MPDZ/MUPP1 and MPP4. Extensively glycosylated. As to expression, preferential expression in retina, also expressed in brain, testis, fetal brain and fetal eye. Expressed at the outer limiting membrane and apical to adherens junctions in the retina.

The protein localises to the apical cell membrane. The protein resides in the secreted. It is found in the cell projection. It localises to the cilium. Its subcellular location is the photoreceptor outer segment. The protein localises to the photoreceptor inner segment. In terms of biological role, plays a role in photoreceptor morphogenesis in the retina. May maintain cell polarization and adhesion. This is Protein crumbs homolog 1 from Homo sapiens (Human).